We begin with the raw amino-acid sequence, 512 residues long: D-alanine--D-alanyl carrier protein ligase (512 aa).

An ATP-binding site is contributed by 152–153 (TS). D199 provides a ligand contact to D-alanine. An ATP-binding site is contributed by 294 to 299 (NAYGPT). A D-alanine-binding site is contributed by V303. ATP is bound by residues D385, 397–400 (YGGR), and K499. A D-alanine-binding site is contributed by K499.

Belongs to the ATP-dependent AMP-binding enzyme family. DltA subfamily.

Its subcellular location is the cytoplasm. The enzyme catalyses holo-[D-alanyl-carrier protein] + D-alanine + ATP = D-alanyl-[D-alanyl-carrier protein] + AMP + diphosphate. It participates in cell wall biogenesis; lipoteichoic acid biosynthesis. Its function is as follows. Catalyzes the first step in the D-alanylation of lipoteichoic acid (LTA), the activation of D-alanine and its transfer onto the D-alanyl carrier protein (Dcp) DltC. In an ATP-dependent two-step reaction, forms a high energy D-alanyl-AMP intermediate, followed by transfer of the D-alanyl residue as a thiol ester to the phosphopantheinyl prosthetic group of the Dcp. D-alanylation of LTA plays an important role in modulating the properties of the cell wall in Gram-positive bacteria, influencing the net charge of the cell wall. The polypeptide is D-alanine--D-alanyl carrier protein ligase (Streptococcus pyogenes serotype M18 (strain MGAS8232)).